We begin with the raw amino-acid sequence, 239 residues long: Putative GEM-like protein 3 (239 aa).

The interval 29 to 68 (HWNPELVSESPAPDEKALSSSSAARSNPYVARAPTETSDA) is disordered. A GRAM domain is found at 128-191 (KIFRQTFETV…HQLKSVNPSI (64 aa)).

It belongs to the GEM family.

The sequence is that of Putative GEM-like protein 3 from Arabidopsis thaliana (Mouse-ear cress).